A 291-amino-acid polypeptide reads, in one-letter code: Orotidine 5'-phosphate decarboxylase (291 aa).

The active-site Proton donor is K97.

Belongs to the OMP decarboxylase family. Type 2 subfamily.

The catalysed reaction is orotidine 5'-phosphate + H(+) = UMP + CO2. The protein operates within pyrimidine metabolism; UMP biosynthesis via de novo pathway; UMP from orotate: step 2/2. The chain is Orotidine 5'-phosphate decarboxylase from Clostridium kluyveri (strain ATCC 8527 / DSM 555 / NBRC 12016 / NCIMB 10680 / K1).